A 99-amino-acid polypeptide reads, in one-letter code: A-type ATP synthase subunit F (99 aa).

The protein belongs to the V-ATPase F subunit family. Has multiple subunits with at least A(3), B(3), C, D, E, F, H, I and proteolipid K(x).

Its subcellular location is the cell membrane. Its function is as follows. Component of the A-type ATP synthase that produces ATP from ADP in the presence of a proton gradient across the membrane. This chain is A-type ATP synthase subunit F, found in Methanococcus maripaludis (strain DSM 14266 / JCM 13030 / NBRC 101832 / S2 / LL).